The chain runs to 261 residues: Ribosome biogenesis protein C3_06160C_A (261 aa).

Residues 1 to 38 form a disordered region; sequence MPQNEYIEQHIKKHGRRLDYEERKRKKEAREGHRVAKD. Short sequence motifs (nuclear localization signal) lie at residues 11-18 and 51-58; these read IKKHGRRL and AKKRYAEK. Residues 17–37 show a composition bias toward basic and acidic residues; it reads RLDYEERKRKKEAREGHRVAK. Positions 59 to 85 are disordered; it reads VAMKKKIKAHQESKVKGPSTPKAEDGE.

The protein belongs to the eukaryotic ribosomal protein eS8 family. Ribosome biogenesis protein NSA2 subfamily. Component of the pre-66S ribosomal particle. Interacts with NOP7 and RRP1. Interacts with RSA4 (via WD repeats).

It is found in the nucleus. The protein resides in the nucleolus. Functionally, involved in the biogenesis of the 60S ribosomal subunit. May play a part in the quality control of pre-60S particles. The sequence is that of Ribosome biogenesis protein C3_06160C_A from Candida albicans (strain SC5314 / ATCC MYA-2876) (Yeast).